The chain runs to 292 residues: Glycine--tRNA ligase alpha subunit (292 aa).

The protein belongs to the class-II aminoacyl-tRNA synthetase family. As to quaternary structure, tetramer of two alpha and two beta subunits.

The protein resides in the cytoplasm. The catalysed reaction is tRNA(Gly) + glycine + ATP = glycyl-tRNA(Gly) + AMP + diphosphate. This chain is Glycine--tRNA ligase alpha subunit, found in Synechococcus elongatus (strain ATCC 33912 / PCC 7942 / FACHB-805) (Anacystis nidulans R2).